Consider the following 494-residue polypeptide: Glutamyl-tRNA(Gln) amidotransferase subunit A (494 aa).

Catalysis depends on charge relay system residues Lys-78 and Ser-158. Residue Ser-182 is the Acyl-ester intermediate of the active site.

This sequence belongs to the amidase family. GatA subfamily. Heterotrimer of A, B and C subunits.

It carries out the reaction L-glutamyl-tRNA(Gln) + L-glutamine + ATP + H2O = L-glutaminyl-tRNA(Gln) + L-glutamate + ADP + phosphate + H(+). In terms of biological role, allows the formation of correctly charged Gln-tRNA(Gln) through the transamidation of misacylated Glu-tRNA(Gln) in organisms which lack glutaminyl-tRNA synthetase. The reaction takes place in the presence of glutamine and ATP through an activated gamma-phospho-Glu-tRNA(Gln). The polypeptide is Glutamyl-tRNA(Gln) amidotransferase subunit A (Xanthobacter autotrophicus (strain ATCC BAA-1158 / Py2)).